The chain runs to 293 residues: Homoserine kinase (293 aa).

84–94 is a binding site for ATP; sequence PISRGLGSSSA.

This sequence belongs to the GHMP kinase family. Homoserine kinase subfamily.

The protein localises to the cytoplasm. The catalysed reaction is L-homoserine + ATP = O-phospho-L-homoserine + ADP + H(+). The protein operates within amino-acid biosynthesis; L-threonine biosynthesis; L-threonine from L-aspartate: step 4/5. Functionally, catalyzes the ATP-dependent phosphorylation of L-homoserine to L-homoserine phosphate. In Wolinella succinogenes (strain ATCC 29543 / DSM 1740 / CCUG 13145 / JCM 31913 / LMG 7466 / NCTC 11488 / FDC 602W) (Vibrio succinogenes), this protein is Homoserine kinase.